The primary structure comprises 385 residues: GDP-D-glucose phosphorylase 1 (385 aa).

His-218 (tele-GMP-histidine intermediate) is an active-site residue.

It belongs to the GDPGP1 family.

It localises to the cytoplasm. The catalysed reaction is GDP-alpha-D-glucose + phosphate = alpha-D-glucose 1-phosphate + GDP + H(+). In terms of biological role, specific and highly efficient GDP-D-glucose phosphorylase regulating the levels of GDP-D-glucose in cells. The chain is GDP-D-glucose phosphorylase 1 (GDPGP1) from Homo sapiens (Human).